Here is a 476-residue protein sequence, read N- to C-terminus: Bifunctional protein HldE (476 aa).

The ribokinase stretch occupies residues 1–318 (MKLDLTVLEQ…YTALHGDKLA (318 aa)). ATP is bound at residue 195–198 (NLGE). Residue Asp-264 is part of the active site. Positions 344–476 (MTNGCFDILH…MIDTILDREG (133 aa)) are cytidylyltransferase.

In the N-terminal section; belongs to the carbohydrate kinase PfkB family. This sequence in the C-terminal section; belongs to the cytidylyltransferase family. Homodimer.

It catalyses the reaction D-glycero-beta-D-manno-heptose 7-phosphate + ATP = D-glycero-beta-D-manno-heptose 1,7-bisphosphate + ADP + H(+). The enzyme catalyses D-glycero-beta-D-manno-heptose 1-phosphate + ATP + H(+) = ADP-D-glycero-beta-D-manno-heptose + diphosphate. It functions in the pathway nucleotide-sugar biosynthesis; ADP-L-glycero-beta-D-manno-heptose biosynthesis; ADP-L-glycero-beta-D-manno-heptose from D-glycero-beta-D-manno-heptose 7-phosphate: step 1/4. It participates in nucleotide-sugar biosynthesis; ADP-L-glycero-beta-D-manno-heptose biosynthesis; ADP-L-glycero-beta-D-manno-heptose from D-glycero-beta-D-manno-heptose 7-phosphate: step 3/4. Catalyzes the phosphorylation of D-glycero-D-manno-heptose 7-phosphate at the C-1 position to selectively form D-glycero-beta-D-manno-heptose-1,7-bisphosphate. In terms of biological role, catalyzes the ADP transfer from ATP to D-glycero-beta-D-manno-heptose 1-phosphate, yielding ADP-D-glycero-beta-D-manno-heptose. The polypeptide is Bifunctional protein HldE (Chromohalobacter salexigens (strain ATCC BAA-138 / DSM 3043 / CIP 106854 / NCIMB 13768 / 1H11)).